Consider the following 801-residue polypeptide: Na(+)/H(+) antiporter subunit A1 (801 aa).

Helical transmembrane passes span 4–25, 30–49, 79–101, 108–127, 131–153, 166–188, 208–230, 243–265, 270–289, 302–324, 339–361, 373–395, 429–451, 472–494, 526–548, 589–611, 621–641, 646–668, 672–694, 707–729, and 767–784; these read LHIA…YRFF, LGWF…LTLI, LGLL…SIGY, LGNF…GVVL, VIIL…SFWR, LIIT…IPTQ, FIFA…PFYI, SAYL…MTPI, QGWV…WASL, AFST…ISYH, AAIF…TGAV, LGGL…LSMA, YLFP…KFIM, ILML…FPGI, AFLS…SYWV, NNLV…SVPF, IRIF…LILF, LFSI…FFKA, ALTQ…YHLP, LTNA…IAYG, and LFES…YTMI.

This sequence belongs to the CPA3 antiporters (TC 2.A.63) subunit A family. May form a heterooligomeric complex that consists of seven subunits: mnhA1, mnhB1, mnhC1, mnhD1, mnhE1, mnhF1 and mnhG1.

The protein localises to the cell membrane. With respect to regulation, na(+) extrusion is completely inhibited by the H(+) conductor carbonyl cyanide m-chlorophenylhydrazone (CCCP). Functionally, mnh complex is a Na(+)/H(+) antiporter involved in Na(+) excretion. The protein is Na(+)/H(+) antiporter subunit A1 (mnhA1) of Staphylococcus aureus (strain MSSA476).